Here is a 568-residue protein sequence, read N- to C-terminus: MVSILAIRTFNPLGHFVSTQCVRAYAINSVRAGSKSSSVRAGSKNDTTRASSKKNKAGKSKLQLSARFKQNANKSQKADKFKSQKQFKYGLYGGLKENENKFLETNANLVEKITEFEELKLLPEVRKHVINLIKKDSLNTTEEIHPSPIQTIAIKRLSKNLMEPKLQVHAIAAETGSGKTMAYCAPLLDYLKRQEIETPEKWESIKDKAIIRSVILVPTLELVDQIYTTLTCIPDTLGIHVHKWTTGVDYQQLLENLKSRTDILITTPSKLLSLQRVRMISRADLILKRIEFVVLDEADTLLDKSWLEDTHKALKAMSDVNHLVLCSATIPNEFDRTMTKMFPNAIPLTTPRLHKLPKGINFRIINAAVSPYKGSKIKALAQTLYAIAYDGTDPGFEKRCIVFINEKKNVDNVVQKLRNEYGHDVVGLTGDMEGRTRLELIRPFISPPEKLTEQEKQIDKDLNDQETVNISGSNISIGNIENSNKASNFIPKLRVLVTTDLLARGLNFKGVRNVILYDVPITAIDLVHRAGRTARMRQSGRVFMIIDKKTQSWAKAVPTILKKNKALT.

The transit peptide at 1–50 directs the protein to the mitochondrion; that stretch reads MVSILAIRTFNPLGHFVSTQCVRAYAINSVRAGSKSSSVRAGSKNDTTRA. Residues 36–49 show a composition bias toward polar residues; that stretch reads SSSVRAGSKNDTTR. A disordered region spans residues 36–64; it reads SSSVRAGSKNDTTRASSKKNKAGKSKLQL. The Q motif motif lies at 143–150; the sequence is EIHPSPIQ. The Helicase ATP-binding domain maps to 160 to 348; it reads NLMEPKLQVH…TKMFPNAIPL (189 aa). Residue 173 to 180 participates in ATP binding; the sequence is AETGSGKT. The DEAD box signature appears at 296–299; it reads DEAD. Positions 379-568 constitute a Helicase C-terminal domain; the sequence is ALAQTLYAIA…TILKKNKALT (190 aa).

This sequence belongs to the DEAD box helicase family. MRH4 subfamily.

It is found in the mitochondrion. The enzyme catalyses ATP + H2O = ADP + phosphate + H(+). Its function is as follows. ATP-binding RNA helicase involved in mitochondrial RNA metabolism. Required for maintenance of mitochondrial DNA. The sequence is that of ATP-dependent RNA helicase MRH4, mitochondrial (MRH4) from Candida glabrata (strain ATCC 2001 / BCRC 20586 / JCM 3761 / NBRC 0622 / NRRL Y-65 / CBS 138) (Yeast).